The primary structure comprises 374 residues: Probable ethanolamine kinase (374 aa).

Residues Arg-93 and Asp-252 each coordinate ATP.

Belongs to the choline/ethanolamine kinase family.

The enzyme catalyses ethanolamine + ATP = phosphoethanolamine + ADP + H(+). It functions in the pathway phospholipid metabolism; phosphatidylethanolamine biosynthesis; phosphatidylethanolamine from ethanolamine: step 1/3. Its function is as follows. Involved in phospholipid biosynthesis. Catalyzes the first step in phosphatidylethanolamine biosynthesis. This chain is Probable ethanolamine kinase (EMB1187), found in Arabidopsis thaliana (Mouse-ear cress).